The following is a 296-amino-acid chain: ADP-dependent (S)-NAD(P)H-hydrate dehydratase (296 aa).

The YjeF C-terminal domain maps to 18 to 292 (TALRFPHVFK…PAARWLRNRI (275 aa)). (6S)-NADPHX is bound by residues Ala53, Gly113, and His165. Residues 202–206 (KGHKT) and Gly231 each bind AMP. (6S)-NADPHX is bound at residue Asp232.

This sequence belongs to the NnrD/CARKD family. Homotetramer. It depends on Mg(2+) as a cofactor.

The enzyme catalyses (6S)-NADHX + ADP = AMP + phosphate + NADH + H(+). It catalyses the reaction (6S)-NADPHX + ADP = AMP + phosphate + NADPH + H(+). In terms of biological role, catalyzes the dehydration of the S-form of NAD(P)HX at the expense of ADP, which is converted to AMP. Together with NAD(P)HX epimerase, which catalyzes the epimerization of the S- and R-forms, the enzyme allows the repair of both epimers of NAD(P)HX, a damaged form of NAD(P)H that is a result of enzymatic or heat-dependent hydration. The protein is ADP-dependent (S)-NAD(P)H-hydrate dehydratase of Neisseria meningitidis serogroup B (strain ATCC BAA-335 / MC58).